Reading from the N-terminus, the 342-residue chain is S-adenosylmethionine:tRNA ribosyltransferase-isomerase (342 aa).

This sequence belongs to the QueA family. As to quaternary structure, monomer.

The protein resides in the cytoplasm. It catalyses the reaction 7-aminomethyl-7-carbaguanosine(34) in tRNA + S-adenosyl-L-methionine = epoxyqueuosine(34) in tRNA + adenine + L-methionine + 2 H(+). It participates in tRNA modification; tRNA-queuosine biosynthesis. In terms of biological role, transfers and isomerizes the ribose moiety from AdoMet to the 7-aminomethyl group of 7-deazaguanine (preQ1-tRNA) to give epoxyqueuosine (oQ-tRNA). This is S-adenosylmethionine:tRNA ribosyltransferase-isomerase from Streptococcus pneumoniae serotype 4 (strain ATCC BAA-334 / TIGR4).